The primary structure comprises 686 residues: tRNA wybutosine-synthesizing protein 4 (686 aa).

Basic and acidic residues predominate over residues 1 to 10 (MGPRSRERRA). Residues 1-21 (MGPRSRERRAGAVQNTNDSSA) form a disordered region. Residues arginine 59, glycine 89, aspartate 114, 161-162 (DL), and glutamate 188 contribute to the S-adenosyl-L-methionine site.

The protein belongs to the methyltransferase superfamily. LCMT family. As to quaternary structure, interacts with RNF144B/IBRDC2.

It carries out the reaction 7-[(3S)-3-amino-3-carboxypropyl]wyosine(37) in tRNA(Phe) + S-adenosyl-L-methionine = 7-[(3S)-(3-amino-3-methoxycarbonyl)propyl]wyosine(37) in tRNA(Phe) + S-adenosyl-L-homocysteine. The catalysed reaction is 7-[(3S)-(3-amino-3-methoxycarbonyl)propyl]wyosine(37) in tRNA(Phe) + S-adenosyl-L-methionine + CO2 = wybutosine(37) in tRNA(Phe) + S-adenosyl-L-homocysteine + 2 H(+). Its pathway is tRNA modification; wybutosine-tRNA(Phe) biosynthesis. Probable S-adenosyl-L-methionine-dependent methyltransferase that acts as a component of the wybutosine biosynthesis pathway. Wybutosine is a hyper modified guanosine with a tricyclic base found at the 3'-position adjacent to the anticodon of eukaryotic phenylalanine tRNA. May methylate the carboxyl group of leucine residues to form alpha-leucine ester residues. This is tRNA wybutosine-synthesizing protein 4 (LCMT2) from Homo sapiens (Human).